The chain runs to 274 residues: Putative pyruvate, phosphate dikinase regulatory protein (274 aa).

150 to 157 (GPSRTSKT) provides a ligand contact to ADP.

This sequence belongs to the pyruvate, phosphate/water dikinase regulatory protein family. PDRP subfamily.

The enzyme catalyses N(tele)-phospho-L-histidyl/L-threonyl-[pyruvate, phosphate dikinase] + ADP = N(tele)-phospho-L-histidyl/O-phospho-L-threonyl-[pyruvate, phosphate dikinase] + AMP + H(+). The catalysed reaction is N(tele)-phospho-L-histidyl/O-phospho-L-threonyl-[pyruvate, phosphate dikinase] + phosphate + H(+) = N(tele)-phospho-L-histidyl/L-threonyl-[pyruvate, phosphate dikinase] + diphosphate. In terms of biological role, bifunctional serine/threonine kinase and phosphorylase involved in the regulation of the pyruvate, phosphate dikinase (PPDK) by catalyzing its phosphorylation/dephosphorylation. The chain is Putative pyruvate, phosphate dikinase regulatory protein from Rickettsia peacockii (strain Rustic).